The chain runs to 702 residues: Phosphate acetyltransferase (702 aa).

Residues 375–702 are phosphate acetyltransferase; that stretch reads AFRYELIQRA…QATQSAADCG (328 aa).

In the N-terminal section; belongs to the CobB/CobQ family. This sequence in the C-terminal section; belongs to the phosphate acetyltransferase and butyryltransferase family. In terms of assembly, homohexamer.

The protein localises to the cytoplasm. It catalyses the reaction acetyl-CoA + phosphate = acetyl phosphate + CoA. It participates in metabolic intermediate biosynthesis; acetyl-CoA biosynthesis; acetyl-CoA from acetate: step 2/2. Its function is as follows. Involved in acetate metabolism. The chain is Phosphate acetyltransferase (pta) from Deinococcus radiodurans (strain ATCC 13939 / DSM 20539 / JCM 16871 / CCUG 27074 / LMG 4051 / NBRC 15346 / NCIMB 9279 / VKM B-1422 / R1).